Reading from the N-terminus, the 403-residue chain is Leu/Ile/Val-binding protein homolog 8 (403 aa).

The N-terminal stretch at 1–26 (MRLSRLLIGASLGVALSSTVFTAALA) is a signal peptide.

Belongs to the leucine-binding protein family.

Functionally, component of an amino-acid transport system. The polypeptide is Leu/Ile/Val-binding protein homolog 8 (Brucella melitensis biotype 1 (strain ATCC 23456 / CCUG 17765 / NCTC 10094 / 16M)).